The sequence spans 355 residues: UDP-N-acetylglucosamine--N-acetylmuramyl-(pentapeptide) pyrophosphoryl-undecaprenol N-acetylglucosamine transferase (355 aa).

UDP-N-acetyl-alpha-D-glucosamine contacts are provided by residues 15–17 (TGG), Asn-127, Arg-163, Ser-191, Ile-244, 263–268 (ALTVSE), and Gln-288.

Belongs to the glycosyltransferase 28 family. MurG subfamily.

It localises to the cell inner membrane. The catalysed reaction is di-trans,octa-cis-undecaprenyl diphospho-N-acetyl-alpha-D-muramoyl-L-alanyl-D-glutamyl-meso-2,6-diaminopimeloyl-D-alanyl-D-alanine + UDP-N-acetyl-alpha-D-glucosamine = di-trans,octa-cis-undecaprenyl diphospho-[N-acetyl-alpha-D-glucosaminyl-(1-&gt;4)]-N-acetyl-alpha-D-muramoyl-L-alanyl-D-glutamyl-meso-2,6-diaminopimeloyl-D-alanyl-D-alanine + UDP + H(+). Its pathway is cell wall biogenesis; peptidoglycan biosynthesis. In terms of biological role, cell wall formation. Catalyzes the transfer of a GlcNAc subunit on undecaprenyl-pyrophosphoryl-MurNAc-pentapeptide (lipid intermediate I) to form undecaprenyl-pyrophosphoryl-MurNAc-(pentapeptide)GlcNAc (lipid intermediate II). In Escherichia coli O45:K1 (strain S88 / ExPEC), this protein is UDP-N-acetylglucosamine--N-acetylmuramyl-(pentapeptide) pyrophosphoryl-undecaprenol N-acetylglucosamine transferase.